The following is a 489-amino-acid chain: Dipeptide and tripeptide permease B (489 aa).

Topologically, residues 1–27 are cytoplasmic; it reads MNTTTPMGMLQQPRPFFMIFFVELWER. A helical transmembrane segment spans residues 28–48; the sequence is FGYYGVQGVLAVFFVKQLGFS. Residues 49–52 are Periplasmic-facing; it reads QEQA. Residues 53-73 form a helical membrane-spanning segment; that stretch reads FVTFGAFAALVYGLISIGGYV. At 74 to 82 the chain is on the cytoplasmic side; that stretch reads GDHLLGTKR. The helical transmembrane segment at 83–103 threads the bilayer; that stretch reads TIVLGALVLAIGYFMTGLSLL. The Periplasmic segment spans residues 104–106; that stretch reads KPD. Residues 107–127 traverse the membrane as a helical segment; sequence LIFIALGTIAVGNGLFKANPA. At 128–146 the chain is on the cytoplasmic side; that stretch reads SLLSKCYPPKAPRLDGAFT. Residues 147 to 167 form a helical membrane-spanning segment; the sequence is LFYMSINIGSLIALSLAPVIA. Topologically, residues 168 to 172 are periplasmic; that stretch reads DRFGY. A helical transmembrane segment spans residues 173-193; the sequence is SVTYNLCGAGLIIALLVYIAC. The Cytoplasmic segment spans residues 194-210; it reads RGMVKDIGSEPDFRPMS. The chain crosses the membrane as a helical span at residues 211 to 231; the sequence is FSKLLYVLLGSVVMIFVCAWL. The Periplasmic portion of the chain corresponds to 232–233; it reads MH. Residues 234-254 form a helical membrane-spanning segment; it reads NVEVANLVLIVLSIVVTIIFF. The Cytoplasmic portion of the chain corresponds to 255 to 267; that stretch reads RQAFKLDKTGRNK. A helical transmembrane segment spans residues 268–288; sequence MFVAFVLMLEAVVFYILYAQM. Residues 289 to 311 are Periplasmic-facing; that stretch reads PTSLNFFAINNVHHEILGFSINP. A helical membrane pass occupies residues 312–332; the sequence is VSFQALNPFWVVLASPILAGI. Residues 333 to 350 lie on the Cytoplasmic side of the membrane; it reads YTHLGSKGKDLSMPMKFT. The helical transmembrane segment at 351–371 threads the bilayer; it reads LGMFMCSLGFLTAAAAGMWFA. Residues 372 to 380 are Periplasmic-facing; that stretch reads DAQGLTSPW. Residues 381–401 traverse the membrane as a helical segment; that stretch reads FIVLVYLFQSLGELFISALGL. Over 402–411 the chain is Cytoplasmic; it reads AMVAALVPQH. Residues 412 to 432 form a helical membrane-spanning segment; sequence LMGFILGISFLTQAAAFLLGG. Residues 433–456 are Periplasmic-facing; it reads YVATFTAVPDNITDPLETLPVYTN. A helical transmembrane segment spans residues 457–477; it reads VFGKIGLVTLGVAVVMLLMVP. The Cytoplasmic portion of the chain corresponds to 478-489; the sequence is WLKRMIAAPESH.

This sequence belongs to the major facilitator superfamily. Proton-dependent oligopeptide transporter (POT/PTR) (TC 2.A.17) family. DtpB subfamily.

Its subcellular location is the cell inner membrane. Its function is as follows. Proton-dependent permease that transports di- and tripeptides. This is Dipeptide and tripeptide permease B from Shigella dysenteriae serotype 1 (strain Sd197).